A 484-amino-acid polypeptide reads, in one-letter code: NADH-quinone oxidoreductase subunit N (484 aa).

Transmembrane regions (helical) follow at residues 10-30 (LALP…VDLF), 40-60 (FYLT…TQWG), 74-94 (SLGA…LAYT), 108-128 (FYLL…GGSL), 129-149 (LSLY…VAYH), 163-183 (FVLG…VYGA), 203-223 (LMLL…LGAA), 237-257 (PTPV…ALFM), 272-292 (EPML…IAIV), 299-319 (MLAY…TAGT), 327-347 (LFYT…ITVL), 370-390 (YAGV…TVGF), and 404-424 (GHIP…FYYL).

It belongs to the complex I subunit 2 family. In terms of assembly, NDH-1 is composed of 14 different subunits. Subunits NuoA, H, J, K, L, M, N constitute the membrane sector of the complex.

It localises to the cell inner membrane. It carries out the reaction a quinone + NADH + 5 H(+)(in) = a quinol + NAD(+) + 4 H(+)(out). Its function is as follows. NDH-1 shuttles electrons from NADH, via FMN and iron-sulfur (Fe-S) centers, to quinones in the respiratory chain. The immediate electron acceptor for the enzyme in this species is believed to be ubiquinone. Couples the redox reaction to proton translocation (for every two electrons transferred, four hydrogen ions are translocated across the cytoplasmic membrane), and thus conserves the redox energy in a proton gradient. The chain is NADH-quinone oxidoreductase subunit N from Halorhodospira halophila (strain DSM 244 / SL1) (Ectothiorhodospira halophila (strain DSM 244 / SL1)).